A 676-amino-acid polypeptide reads, in one-letter code: ATP-dependent RNA helicase dbp-9 (676 aa).

Residues 1-97 (MAKRKLNETD…SEKDDADLTF (97 aa)) are disordered. A compositionally biased stretch (basic and acidic residues) spans 70–90 (QQLKDEQKQQDEKDEKKQSEK). Positions 95–123 (LTFSDLGLDPRLVQAVAKQSFEKPTLVQR) match the Q motif motif. Positions 126–304 (IPLALAGQDV…KGFFCRNPTM (179 aa)) constitute a Helicase ATP-binding domain. 139 to 146 (AKTGSGKT) is an ATP binding site. Positions 251–254 (DEAD) match the DEAD box motif. The Helicase C-terminal domain maps to 317–541 (KLTQFYVKCG…PYNFNKDQME (225 aa)). The segment covering 410 to 432 (EDEKTEEKKEEQGEKKEGDEKKN) has biased composition (basic and acidic residues). Disordered stretches follow at residues 410-444 (EDEKTEEKKEEQGEKKEGDEKKNGKGKKKKGRRDQ) and 633-676 (FKKQ…RVRK). Residues 642 to 663 (TRGKKGAKGGKGGHGKYKKGPG) are compositionally biased toward basic residues.

It belongs to the DEAD box helicase family. DDX56/DBP9 subfamily.

It localises to the nucleus. The protein resides in the nucleolus. It catalyses the reaction ATP + H2O = ADP + phosphate + H(+). In terms of biological role, ATP-binding RNA helicase involved in the biogenesis of 60S ribosomal subunits and is required for the normal formation of 25S and 5.8S rRNAs. This is ATP-dependent RNA helicase dbp-9 (dbp-9) from Neurospora crassa (strain ATCC 24698 / 74-OR23-1A / CBS 708.71 / DSM 1257 / FGSC 987).